The primary structure comprises 155 residues: Gastrin-releasing peptide (155 aa).

The first 31 residues, 1–31 (MEGVLLFWKYRALFFLVLCSLVLCKVHLSQA), serve as a signal peptide directing secretion. Position 60 is a methionine amide (methionine 60). A propeptide spanning residues 128 to 155 (FSGAEDNNLKEMLDYLYQMMNMKENTSS) is cleaved from the precursor.

Belongs to the bombesin/neuromedin-B/ranatensin family. As to expression, brain and stomach. In the stomach GRP was localized, at the base of the gastric pits, to occasional cells whose distribution and appearance were consistent with that of gut neuroendocrine cells.

The protein localises to the secreted. It is found in the cytoplasmic vesicle. Its subcellular location is the secretory vesicle lumen. In terms of biological role, stimulates the release of gastrin and other gastrointestinal hormones. This is Gastrin-releasing peptide (grp) from Bombina orientalis (Oriental fire-bellied toad).